A 340-amino-acid chain; its full sequence is S-adenosylmethionine:tRNA ribosyltransferase-isomerase (340 aa).

Belongs to the QueA family. Monomer.

It is found in the cytoplasm. The catalysed reaction is 7-aminomethyl-7-carbaguanosine(34) in tRNA + S-adenosyl-L-methionine = epoxyqueuosine(34) in tRNA + adenine + L-methionine + 2 H(+). The protein operates within tRNA modification; tRNA-queuosine biosynthesis. Functionally, transfers and isomerizes the ribose moiety from AdoMet to the 7-aminomethyl group of 7-deazaguanine (preQ1-tRNA) to give epoxyqueuosine (oQ-tRNA). The chain is S-adenosylmethionine:tRNA ribosyltransferase-isomerase from Vesicomyosocius okutanii subsp. Calyptogena okutanii (strain HA).